The following is a 259-amino-acid chain: UPF0246 protein PSPPH_1119 (259 aa).

It belongs to the UPF0246 family.

This is UPF0246 protein PSPPH_1119 from Pseudomonas savastanoi pv. phaseolicola (strain 1448A / Race 6) (Pseudomonas syringae pv. phaseolicola (strain 1448A / Race 6)).